We begin with the raw amino-acid sequence, 623 residues long: UvrABC system protein C (623 aa).

The 79-residue stretch at glycine 27 to valine 105 folds into the GIY-YIG domain. Positions threonine 215–valine 250 constitute a UVR domain.

The protein belongs to the UvrC family. In terms of assembly, interacts with UvrB in an incision complex.

The protein resides in the cytoplasm. Its function is as follows. The UvrABC repair system catalyzes the recognition and processing of DNA lesions. UvrC both incises the 5' and 3' sides of the lesion. The N-terminal half is responsible for the 3' incision and the C-terminal half is responsible for the 5' incision. The sequence is that of UvrABC system protein C from Cereibacter sphaeroides (strain ATCC 17023 / DSM 158 / JCM 6121 / CCUG 31486 / LMG 2827 / NBRC 12203 / NCIMB 8253 / ATH 2.4.1.) (Rhodobacter sphaeroides).